Here is a 222-residue protein sequence, read N- to C-terminus: MAFVKSGWLLRQSTILKRWKKNWFDLWSDGHLIYYDDQTRQNIEDKVHMPVDCINIRTGQECRDIQPPDGKSKDCMLQIVCRDGKTISLCAESTDDCLAWKFTLQDSRTNTAYVGSAVMTDETSMVSSPPPYTAYAAPAPEQAYGYGPYGGAYPPGTQVVYAANGQAYAVPYQYPYAGLYGQQPANQVIIRERYRDNDSDLALGMLAGAATGMALGSLFWVF.

The region spanning Ala2–Thr109 is the PH domain. Residue Lys20 coordinates a 1,2-diacyl-sn-glycero-3-phospho-L-serine.

It is found in the recycling endosome membrane. Its function is as follows. Involved in retrograde transport of recycling endosomes. The protein is Pleckstrin homology domain-containing family B member 2 (PLEKHB2) of Pongo abelii (Sumatran orangutan).